Consider the following 387-residue polypeptide: Probable peptidoglycan glycosyltransferase FtsW (387 aa).

The next 9 membrane-spanning stretches (helical) occupy residues 20–40 (LYLLGAAVALMGLGWVMVGSA), 61–81 (LFLLLGLVTAFGVWRIRLAFW), 86–106 (PVMLLLGLGLLLLTLIPGIGV), 149–169 (TIRGFLFPVGVFAMAGLLLLL), 172–192 (DFGAVVVLFATLLGMLFLGGA), 194–214 (LWHFLLLAALGGASLAALAWY), 284–304 (LMGSLAVIALFVVFIYRVLLI), 322–342 (GLGIWIGLQAFINLGVNMGVL), and 349–369 (LPLMSAGGSSSIVTCVAVALI).

Belongs to the SEDS family. FtsW subfamily.

Its subcellular location is the cell inner membrane. The catalysed reaction is [GlcNAc-(1-&gt;4)-Mur2Ac(oyl-L-Ala-gamma-D-Glu-L-Lys-D-Ala-D-Ala)](n)-di-trans,octa-cis-undecaprenyl diphosphate + beta-D-GlcNAc-(1-&gt;4)-Mur2Ac(oyl-L-Ala-gamma-D-Glu-L-Lys-D-Ala-D-Ala)-di-trans,octa-cis-undecaprenyl diphosphate = [GlcNAc-(1-&gt;4)-Mur2Ac(oyl-L-Ala-gamma-D-Glu-L-Lys-D-Ala-D-Ala)](n+1)-di-trans,octa-cis-undecaprenyl diphosphate + di-trans,octa-cis-undecaprenyl diphosphate + H(+). It functions in the pathway cell wall biogenesis; peptidoglycan biosynthesis. In terms of biological role, peptidoglycan polymerase that is essential for cell division. This chain is Probable peptidoglycan glycosyltransferase FtsW, found in Nitrosococcus halophilus (strain Nc4).